Consider the following 426-residue polypeptide: Glutamyl-tRNA reductase (426 aa).

Residues Thr52–Arg55, Ser110, Glu115–Glu117, and Gln121 contribute to the substrate site. The active-site Nucleophile is Cys53. Residue Gly190–Gly195 participates in NADP(+) binding.

The protein belongs to the glutamyl-tRNA reductase family. As to quaternary structure, homodimer.

It catalyses the reaction (S)-4-amino-5-oxopentanoate + tRNA(Glu) + NADP(+) = L-glutamyl-tRNA(Glu) + NADPH + H(+). Its pathway is porphyrin-containing compound metabolism; protoporphyrin-IX biosynthesis; 5-aminolevulinate from L-glutamyl-tRNA(Glu): step 1/2. Its function is as follows. Catalyzes the NADPH-dependent reduction of glutamyl-tRNA(Glu) to glutamate 1-semialdehyde (GSA). The polypeptide is Glutamyl-tRNA reductase (Saccharolobus islandicus (strain Y.N.15.51 / Yellowstone #2) (Sulfolobus islandicus)).